The chain runs to 398 residues: Nicotinate phosphoribosyltransferase 2 (398 aa).

His-224 is modified (phosphohistidine; by autocatalysis).

It belongs to the NAPRTase family. Post-translationally, transiently phosphorylated on a His residue during the reaction cycle. Phosphorylation strongly increases the affinity for substrates and increases the rate of nicotinate D-ribonucleotide production. Dephosphorylation regenerates the low-affinity form of the enzyme, leading to product release.

It carries out the reaction nicotinate + 5-phospho-alpha-D-ribose 1-diphosphate + ATP + H2O = nicotinate beta-D-ribonucleotide + ADP + phosphate + diphosphate. It functions in the pathway cofactor biosynthesis; NAD(+) biosynthesis; nicotinate D-ribonucleotide from nicotinate: step 1/1. Functionally, catalyzes the synthesis of beta-nicotinate D-ribonucleotide from nicotinate and 5-phospho-D-ribose 1-phosphate at the expense of ATP. The polypeptide is Nicotinate phosphoribosyltransferase 2 (Pseudomonas aeruginosa (strain ATCC 15692 / DSM 22644 / CIP 104116 / JCM 14847 / LMG 12228 / 1C / PRS 101 / PAO1)).